We begin with the raw amino-acid sequence, 146 residues long: UPF0260 protein Sama_1927 (146 aa).

This sequence belongs to the UPF0260 family.

This chain is UPF0260 protein Sama_1927, found in Shewanella amazonensis (strain ATCC BAA-1098 / SB2B).